A 392-amino-acid chain; its full sequence is S-adenosylmethionine synthase (392 aa).

A Mg(2+)-binding site is contributed by glutamate 10. An ATP-binding site is contributed by histidine 16. Glutamate 44 is a K(+) binding site. The L-methionine site is built by glutamate 57 and glutamine 100. Residues 168-170, 236-239, aspartate 247, 253-254, alanine 270, lysine 274, and lysine 278 each bind ATP; these read DGK, SGRF, and RK. Aspartate 247 is an L-methionine binding site. Lysine 278 serves as a coordination point for L-methionine.

The protein belongs to the AdoMet synthase family. Homotetramer. Mn(2+) is required as a cofactor. Mg(2+) serves as cofactor. Requires Co(2+) as cofactor. It depends on K(+) as a cofactor.

It is found in the cytoplasm. It carries out the reaction L-methionine + ATP + H2O = S-adenosyl-L-methionine + phosphate + diphosphate. Its pathway is amino-acid biosynthesis; S-adenosyl-L-methionine biosynthesis; S-adenosyl-L-methionine from L-methionine: step 1/1. In terms of biological role, catalyzes the formation of S-adenosylmethionine from methionine and ATP. The reaction comprises two steps that are both catalyzed by the same enzyme: formation of S-adenosylmethionine (AdoMet) and triphosphate, and subsequent hydrolysis of the triphosphate. This Phaseolus lunatus (Lima bean) protein is S-adenosylmethionine synthase (SAMS).